The primary structure comprises 426 residues: Dihydroorotase (426 aa).

Zn(2+)-binding residues include histidine 59 and histidine 61. Residues 61–63 and asparagine 93 each bind substrate; that span reads HLR. Zn(2+)-binding residues include aspartate 151, histidine 178, and histidine 232. Asparagine 279 provides a ligand contact to substrate. Residue aspartate 306 coordinates Zn(2+). Aspartate 306 is an active-site residue. Substrate is bound by residues histidine 310 and 324 to 325; that span reads FG.

The protein belongs to the metallo-dependent hydrolases superfamily. DHOase family. Class I DHOase subfamily. Zn(2+) serves as cofactor.

The catalysed reaction is (S)-dihydroorotate + H2O = N-carbamoyl-L-aspartate + H(+). Its pathway is pyrimidine metabolism; UMP biosynthesis via de novo pathway; (S)-dihydroorotate from bicarbonate: step 3/3. In terms of biological role, catalyzes the reversible cyclization of carbamoyl aspartate to dihydroorotate. The chain is Dihydroorotase from Brevibacillus brevis (strain 47 / JCM 6285 / NBRC 100599).